Reading from the N-terminus, the 224-residue chain is Ribosomal RNA small subunit methyltransferase G (224 aa).

Residues Gly69, Leu74, 119 to 120 (AE), and Arg137 contribute to the S-adenosyl-L-methionine site.

The protein belongs to the methyltransferase superfamily. RNA methyltransferase RsmG family.

Its subcellular location is the cytoplasm. Its function is as follows. Specifically methylates the N7 position of guanine in position 518 of 16S rRNA. This chain is Ribosomal RNA small subunit methyltransferase G, found in Mycobacterium bovis (strain ATCC BAA-935 / AF2122/97).